We begin with the raw amino-acid sequence, 214 residues long: Redox-sensing transcriptional repressor Rex (214 aa).

Positions 17 to 56 (LYYRIFKRFYADQVEKASSKQIADAMGIDSATVRRDFSYF) form a DNA-binding region, H-T-H motif. 91–96 (GCGNIG) serves as a coordination point for NAD(+).

Belongs to the transcriptional regulatory Rex family. In terms of assembly, homodimer.

It is found in the cytoplasm. In terms of biological role, modulates transcription in response to changes in cellular NADH/NAD(+) redox state. The chain is Redox-sensing transcriptional repressor Rex from Streptococcus equi subsp. zooepidemicus (strain H70).